Here is a 430-residue protein sequence, read N- to C-terminus: Serine--tRNA ligase (430 aa).

237–239 (TAE) lines the L-serine pocket. Residue 268–270 (RSE) participates in ATP binding. Residue Glu291 participates in L-serine binding. 355–358 (EISS) provides a ligand contact to ATP. Ser391 contacts L-serine.

Belongs to the class-II aminoacyl-tRNA synthetase family. Type-1 seryl-tRNA synthetase subfamily. As to quaternary structure, homodimer. The tRNA molecule binds across the dimer.

It is found in the cytoplasm. The enzyme catalyses tRNA(Ser) + L-serine + ATP = L-seryl-tRNA(Ser) + AMP + diphosphate + H(+). It carries out the reaction tRNA(Sec) + L-serine + ATP = L-seryl-tRNA(Sec) + AMP + diphosphate + H(+). Its pathway is aminoacyl-tRNA biosynthesis; selenocysteinyl-tRNA(Sec) biosynthesis; L-seryl-tRNA(Sec) from L-serine and tRNA(Sec): step 1/1. Its function is as follows. Catalyzes the attachment of serine to tRNA(Ser). Is also able to aminoacylate tRNA(Sec) with serine, to form the misacylated tRNA L-seryl-tRNA(Sec), which will be further converted into selenocysteinyl-tRNA(Sec). This Salmonella heidelberg (strain SL476) protein is Serine--tRNA ligase.